A 452-amino-acid polypeptide reads, in one-letter code: Septin-10 (452 aa).

The Septin-type G domain maps to Gln-36–Glu-302. Positions Gly-46–Ser-53 are G1 motif. GTP contacts are provided by residues Gly-46–Ser-53, Gly-101, Lys-182–Glu-190, Gly-236, and Arg-251. A G3 motif region spans residues Asn-98–Gly-101. The segment at Ala-181–Asp-184 is G4 motif. Phosphoserine is present on Ser-414.

The protein belongs to the TRAFAC class TrmE-Era-EngA-EngB-Septin-like GTPase superfamily. Septin GTPase family. Septins polymerize into heterooligomeric protein complexes that form filaments, and can associate with cellular membranes, actin filaments and microtubules. GTPase activity is required for filament formation. Interacts with ADGB. In terms of processing, proteolytically cleaved in vitro in a calmodulin-dependent manner.

It localises to the cytoplasm. Its subcellular location is the cytoskeleton. It is found in the cell projection. The protein localises to the cilium. The protein resides in the flagellum. Its function is as follows. Filament-forming cytoskeletal GTPase. May play a role in cytokinesis (Potential). The sequence is that of Septin-10 from Mus musculus (Mouse).